The sequence spans 401 residues: Probable 2,3-bisphosphoglycerate-independent phosphoglycerate mutase (401 aa).

This sequence belongs to the BPG-independent phosphoglycerate mutase family. A-PGAM subfamily.

The catalysed reaction is (2R)-2-phosphoglycerate = (2R)-3-phosphoglycerate. The protein operates within carbohydrate degradation; glycolysis; pyruvate from D-glyceraldehyde 3-phosphate: step 3/5. Catalyzes the interconversion of 2-phosphoglycerate and 3-phosphoglycerate. This Thermotoga sp. (strain RQ2) protein is Probable 2,3-bisphosphoglycerate-independent phosphoglycerate mutase.